Consider the following 443-residue polypeptide: MHRASSKHTNAKKEAISTSKIRDNNVRVTRSRAKALGVSNSPSKPAFKHETKRVARPSNKRMASDNITVCNQKRRAVLKDVTNTLAESIISTEGNVKACKRGGKETKQIEEDGLVDVDGEKSKLAEDLSKIRMVESLDASASKQKLVDCAEEDRSDVTDCVQIVDIDSGVQDPQFCSLYAASIYDSINVAELEQRPSTSYMVQVQRDIDPTMRGILIDWLVEVSEEYKLVSDTLYLTVNLIDRFMSHNYIEKQKLQLLGITCMLIASKYEEISAPRLEEFCFITDNTYTRLEVLSMEIKVLNSLHFRLSVPTTKTFLRRFIRAAQASDKVPLIEMEYLANYFAELTLTEYTFLRFLPSLIAASAVFLARWTLDQSNHPWNQTLQHYTRYETSALKNTVLAMEELQLNTSGSTLIAIHTKYNQQKFKRVATLTSPERVNTLFSR.

Over residues 1-10 the composition is skewed to basic residues; that stretch reads MHRASSKHTN. The disordered stretch occupies residues 1–61; that stretch reads MHRASSKHTN…KRVARPSNKR (61 aa). A compositionally biased stretch (basic and acidic residues) spans 11-25; that stretch reads AKKEAISTSKIRDNN.

This sequence belongs to the cyclin family. Cyclin AB subfamily. In terms of tissue distribution, expressed in tissues with active cell division: apical root and shoot meristems, lateral root and leaf primordia, floral meristems and developing pollen.

Functionally, may negatively regulate endocycles and act as a regulator of ploidy levels in endoreduplication. In Arabidopsis thaliana (Mouse-ear cress), this protein is Cyclin-A2-1 (CYCA2-1).